The chain runs to 174 residues: Neuromedin-U (174 aa).

The N-terminal stretch at 1-34 (MLRTESCRPRSPAGQVAAASPLLLLLLLLAWCAG) is a signal peptide. The propeptide occupies 35 to 103 (ACRGAPILPQ…EQDEKDNTKR (69 aa)). A Methionine sulfoxide; partial modification is found at M139. Position 166 is an asparagine amide (N166). The propeptide occupies 170 to 174 (SAGFI).

The protein belongs to the NmU family. In terms of tissue distribution, expressed throughout the enteric nervous system with highest levels being found in the jejunum.

The protein localises to the secreted. Its function is as follows. Ligand for receptors NMUR1 and NMUR2. Stimulates muscle contractions of specific regions of the gastrointestinal tract. In humans, NmU stimulates contractions of the ileum and urinary bladder. Functionally, does not function as a ligand for either NMUR1 or NMUR2. Indirectly induces prolactin release although its potency is much lower than that of neuromedin precursor-related peptide 36. Does not function as a ligand for either NMUR1 or NMUR2. Indirectly induces prolactin release from lactotroph cells in the pituitary gland, probably via the hypothalamic dopaminergic system. The protein is Neuromedin-U (NMU) of Homo sapiens (Human).